A 312-amino-acid polypeptide reads, in one-letter code: Homoserine O-acetyltransferase (312 aa).

Residue cysteine 142 is the Acyl-thioester intermediate of the active site. Substrate contacts are provided by lysine 163 and serine 194. Catalysis depends on histidine 237, which acts as the Proton acceptor. Glutamate 239 is an active-site residue. Arginine 251 contributes to the substrate binding site.

It belongs to the MetA family.

The protein localises to the cytoplasm. It catalyses the reaction L-homoserine + acetyl-CoA = O-acetyl-L-homoserine + CoA. Its pathway is amino-acid biosynthesis; L-methionine biosynthesis via de novo pathway; O-acetyl-L-homoserine from L-homoserine: step 1/1. In terms of biological role, transfers an acetyl group from acetyl-CoA to L-homoserine, forming acetyl-L-homoserine. The polypeptide is Homoserine O-acetyltransferase (Catenibacterium mitsuokai (strain DSM 15897 / JCM 10609 / CCUG 48821 A / CIP 106738 / RCA14-39)).